The chain runs to 171 residues: MDLRQLIRDIPDYPKEGILFFDITPLLGDPDGFRRAIDLLAERFADSGATKIVAAEARGFIFGAALAYKMGLGFVPVRKPGKLPYKTVSVSYDLEYGSDTLCMHEDALLRDEKVLVIDDLLATGGTLSGVIDLVEHFGADIVGIGVVIELEFLNGKEQLRSYGCESILQIA.

The protein belongs to the purine/pyrimidine phosphoribosyltransferase family. As to quaternary structure, homodimer.

Its subcellular location is the cytoplasm. The catalysed reaction is AMP + diphosphate = 5-phospho-alpha-D-ribose 1-diphosphate + adenine. It participates in purine metabolism; AMP biosynthesis via salvage pathway; AMP from adenine: step 1/1. Its function is as follows. Catalyzes a salvage reaction resulting in the formation of AMP, that is energically less costly than de novo synthesis. This chain is Adenine phosphoribosyltransferase, found in Solidesulfovibrio magneticus (strain ATCC 700980 / DSM 13731 / RS-1) (Desulfovibrio magneticus).